We begin with the raw amino-acid sequence, 196 residues long: Small ribosomal subunit protein uS4c (196 aa).

One can recognise an S4 RNA-binding domain in the interval 89–149; the sequence is MRLDNILFRL…DKQRSKALIQ (61 aa).

This sequence belongs to the universal ribosomal protein uS4 family. In terms of assembly, part of the 30S ribosomal subunit. Contacts protein S5. The interaction surface between S4 and S5 is involved in control of translational fidelity.

It localises to the plastid. It is found in the chloroplast. Functionally, one of the primary rRNA binding proteins, it binds directly to 16S rRNA where it nucleates assembly of the body of the 30S subunit. In terms of biological role, with S5 and S12 plays an important role in translational accuracy. This is Small ribosomal subunit protein uS4c (rps4) from Asparagus maritimus (Sea asparagus).